A 780-amino-acid chain; its full sequence is GATOR2 complex protein WDR24 (780 aa).

WD repeat units follow at residues 67–107 (SLNF…RNKQ), 113–153 (EHKR…SVST), 156–196 (GQSE…RCER), 200–240 (AHNG…AKEI), 244–286 (QTIA…IPFA), and 290–333 (EHKD…IDRA). The C4-type zinc finger occupies 708-730 (NCSNCKRPMSNKGWICDRCRQCA). Residues cysteine 709, cysteine 712, cysteine 723, cysteine 726, cysteine 733, cysteine 736, cysteine 747, cysteine 750, histidine 752, histidine 755, histidine 758, cysteine 769, cysteine 773, histidine 775, and cysteine 777 each coordinate Zn(2+). An RING-type; atypical zinc finger spans residues 731–780 (SMCAVCHHVVKGLFVWCQGCCHGGHLQHIMNWMQNNCYCPAGCGHVCEYS).

This sequence belongs to the WD repeat WDR24 family. As to quaternary structure, component of the GATOR2 subcomplex, composed of MIOS, SEC13, SEH1L, WDR24 and WDR59. The GATOR2 complex interacts with CASTOR1 and CASTOR2; the interaction is negatively regulated by arginine. The GATOR2 complex interacts with SESN1, SESN2 and SESN3; the interaction is negatively regulated by amino acids.

The protein localises to the lysosome membrane. The enzyme catalyses S-ubiquitinyl-[E2 ubiquitin-conjugating enzyme]-L-cysteine + [acceptor protein]-L-lysine = [E2 ubiquitin-conjugating enzyme]-L-cysteine + N(6)-ubiquitinyl-[acceptor protein]-L-lysine.. It participates in protein modification; protein ubiquitination. The GATOR2 complex is negatively regulated by the upstream amino acid sensors CASTOR1 and SESN2, which sequester the GATOR2 complex in absence of amino acids. In the presence of abundant amino acids, GATOR2 is released from CASTOR1 and SESN2 and activated. Its function is as follows. Catalytic component of the GATOR2 complex, a multiprotein complex that acts as an activator of the amino acid-sensing branch of the mTORC1 signaling pathway. The GATOR2 complex indirectly activates mTORC1 through the inhibition of the GATOR1 subcomplex. GATOR2 probably acts as an E3 ubiquitin-protein ligase toward GATOR1. In the presence of abundant amino acids, the GATOR2 complex mediates ubiquitination of the NPRL2 core component of the GATOR1 complex, leading to GATOR1 inactivation. In the absence of amino acids, GATOR2 is inhibited, activating the GATOR1 complex. In addition to its role in regulation of the mTORC1 complex, promotes the acidification of lysosomes and facilitates autophagic flux. Within the GATOR2 complex, WDR24 constitutes the catalytic subunit that mediates 'Lys-6'-linked ubiquitination of NPRL2. The sequence is that of GATOR2 complex protein WDR24 from Xenopus laevis (African clawed frog).